Consider the following 329-residue polypeptide: MDMAHERDASSEEEVMGGDLRRGPWTVEEDLLLVNYIAAHGEGRWNSLARSAGLKRTGKSCRLRWLNYLRPDLRRGNITPQEQLLILELHSRWGNRWSKIAQHLPGRTDNEIKNYWRTRVQKHAKQLKCDVNSQQFKDVMRYLWMPRLVERIQAAAAGQQQQQEGGTDTPPLSWQHGGSDGLYESPELPAPDASCWPAEYCAAAGGAQSGGTPAPELSSTTAGSSSLSTDSGAGAQPSWPTQADGAEWFTTACDASSATGGVAMRDTELELAQPPCQGGQTWTTSESSLPGLTFPDLAVADFEIGGFDVDSFWTSMEDDQLWCPTQAAV.

HTH myb-type domains are found at residues 17 to 69 (GGDL…LNYL) and 70 to 124 (RPDL…QKHA). 2 consecutive DNA-binding regions (H-T-H motif) follow at residues 45 to 69 (WNSLARSAGLKRTGKSCRLRWLNYL) and 97 to 120 (WSKIAQHLPGRTDNEIKNYWRTRV). Low complexity-rich tracts occupy residues 155 to 166 (AAAGQQQQQEGG) and 217 to 235 (LSSTTAGSSSLSTDSGAGA). 2 disordered regions span residues 155–189 (AAAGQQQQQEGGTDTPPLSWQHGGSDGLYESPELP) and 206–242 (GAQSGGTPAPELSSTTAGSSSLSTDSGAGAQPSWPTQ).

As to expression, highly expressed in leaves. Expressed in roots and shoots. Expressed at low levels in flowers.

The protein localises to the nucleus. Functionally, transcription factor involved in abiotic stress responses. Plays a regulatory role in tolerance to salt, cold, and drought stresses. Positively regulates the expression of genes involved in proline synthesis and transport, and genes involved in reactive oxygen species (ROS) scavenging such as peroxidase, superoxide dismutase and catalase during salt stress. Transactivates stress-related genes, including LEA3, RAB16A and DREB2A during salt stress. The polypeptide is Transcription factor MYB2 (Oryza sativa subsp. japonica (Rice)).